The chain runs to 135 residues: Serine protease inhibitor swm-1 (135 aa).

The signal sequence occupies residues 1-16 (MRILVIITCIVAVATA). 10 disulfide bridges follow: C20/C53, C29/C48, C33/C44, C37/C73, C55/C67, C80/C114, C89/C109, C93/C105, C97/C133, and C116/C127. 2 TIL domains span residues 20 to 73 (CEAN…VSEC) and 80 to 133 (CPEN…KKDC). N83 carries an N-linked (GlcNAc...) asparagine glycan.

In male, expressed in the vas deferens cuboidal cells and, in posterior body wall and male-specific diagonal muscles. In hermaphrodites, expressed in posterior body wall muscles and spermatheca.

Its subcellular location is the secreted. It localises to the cytoplasmic vesicle. It is found in the secretory vesicle lumen. Functionally, serine protease inhibitor. Probably by inhibiting serine protease tyr-5 in males, prevents the maturation of spermatids into mature motile spermatozoa until their transfer into a hermaphrodite. Also required for efficient sperm transfer and thus for male fertility. This Caenorhabditis elegans protein is Serine protease inhibitor swm-1.